We begin with the raw amino-acid sequence, 164 residues long: UPF0178 protein RPD_2254 (164 aa).

It belongs to the UPF0178 family.

The protein is UPF0178 protein RPD_2254 of Rhodopseudomonas palustris (strain BisB5).